Consider the following 567-residue polypeptide: UPF0313 protein Tpet_0582 (567 aa).

The Radical SAM core domain occupies 288–560 (KAIETVKFSI…NKMKENVLFK (273 aa)). The [4Fe-4S] cluster site is built by C303, C307, and C310.

This sequence belongs to the UPF0313 family. It depends on [4Fe-4S] cluster as a cofactor.

The chain is UPF0313 protein Tpet_0582 from Thermotoga petrophila (strain ATCC BAA-488 / DSM 13995 / JCM 10881 / RKU-1).